The chain runs to 56 residues: Large ribosomal subunit protein bL32 (56 aa).

Over residues 1-16 the composition is skewed to basic residues; that stretch reads MAVQKSKKSRAARGMR. The segment at 1–22 is disordered; that stretch reads MAVQKSKKSRAARGMRRSHDAL.

Belongs to the bacterial ribosomal protein bL32 family.

This Photobacterium profundum (strain SS9) protein is Large ribosomal subunit protein bL32.